We begin with the raw amino-acid sequence, 89 residues long: Small ribosomal subunit protein uS14A (89 aa).

It belongs to the universal ribosomal protein uS14 family. In terms of assembly, part of the 30S ribosomal subunit. Contacts proteins S3 and S10.

In terms of biological role, binds 16S rRNA, required for the assembly of 30S particles and may also be responsible for determining the conformation of the 16S rRNA at the A site. This is Small ribosomal subunit protein uS14A from Streptococcus equi subsp. zooepidemicus (strain MGCS10565).